Consider the following 940-residue polypeptide: MASPPSSGQPRPPPPPPPPARLLLPLLLSLLLSLAPGAWGWARGAPRPPPSSPPLSIMGLMPLTKEVAKGSIGRGVLPAVELAIEQIRNESLLRPYFLDLRLYDTECDNAKGLKAFYDAIKYGPNHLMVFGGVCPSVTSIIAESLQGWNLVQLSFAATTPVLADKKKYPYFFRTVPSDNAVNPAILKLLKHFRWRRVGTLTQDVQRFSEVRNDLTGVLYGEDIEISDTESFSNDPCTSVKKLKGNDVRIILGQFDQNMAAKVFCCAFEESMFGSKYQWIIPGWYEPAWWEQVHVEANSSRCLRRSLLAAMEGYIGVDFEPLSSKQIKTISGKTPQQYEREYNSKRSGVGPSKFHGYAYDGIWVIAKTLQRAMETLHASSRHQRIQDFNYTDHTLGRIILNAMNETNFFGVTGQVVFRNGERMGTIKFTQFQDSREVKVGEYNAVADTLEIINDTIRFQGSEPPKDKTIILEQLRKISLPLYSILSALTILGMIMASAFLFFNIKNRNQKLIKMSSPYMNNLIILGGMLSYASIFLFGLDGSFVSEKTFETLCTVRTWILTVGYTTAFGAMFAKTWRVHAIFKNVKMKKKIIKDQKLLVIVGGMLLIDLCILICWQAVDPLRRTVERYSMEPDPAGRDISIRPLLEHCENTHMTIWLGIVYAYKGLLMLFGCFLAWETRNVSIPALNDSKYIGMSVYNVGIMCIIGAAVSFLTRDQPNVQFCIVALVIIFCSTITLCLVFVPKLITLRTNPDAATQNRRFQFTQNQKKEDSKTSTSVTSVNQASTSRLEGLQSENHRLRMKITELDKDLEEVTMQLQDTPEKTTYIKQNHYQELNDILSLGNFTESTDGGKAILKNHLDQNPQLQWNTTEPSRTCKDPIEDINSPEHIQRRLSLQLPILHHAYLPSIGGVDASCVSPCVSPTASPRHRHVPPSFRVMVSGL.

An N-terminal signal peptide occupies residues 1-40; sequence MASPPSSGQPRPPPPPPPPARLLLPLLLSLLLSLAPGAWG. The Extracellular segment spans residues 41 to 482; it reads WARGAPRPPP…LRKISLPLYS (442 aa). Asparagine 89 carries an N-linked (GlcNAc...) asparagine glycan. 3 disulfide bridges follow: cysteine 107–cysteine 134, cysteine 236–cysteine 265, and cysteine 264–cysteine 301. 4 N-linked (GlcNAc...) asparagine glycosylation sites follow: asparagine 297, asparagine 388, asparagine 403, and asparagine 452. Residues 483-503 form a helical membrane-spanning segment; the sequence is ILSALTILGMIMASAFLFFNI. Over 504 to 521 the chain is Cytoplasmic; the sequence is KNRNQKLIKMSSPYMNNL. The helical transmembrane segment at 522–542 threads the bilayer; sequence IILGGMLSYASIFLFGLDGSF. Over 543-550 the chain is Extracellular; it reads VSEKTFET. A helical transmembrane segment spans residues 551–571; that stretch reads LCTVRTWILTVGYTTAFGAMF. Topologically, residues 572–596 are cytoplasmic; that stretch reads AKTWRVHAIFKNVKMKKKIIKDQKL. A helical transmembrane segment spans residues 597 to 617; it reads LVIVGGMLLIDLCILICWQAV. Over 618–653 the chain is Extracellular; it reads DPLRRTVERYSMEPDPAGRDISIRPLLEHCENTHMT. Residues 654–674 traverse the membrane as a helical segment; that stretch reads IWLGIVYAYKGLLMLFGCFLA. The Cytoplasmic segment spans residues 675–690; sequence WETRNVSIPALNDSKY. The helical transmembrane segment at 691–711 threads the bilayer; sequence IGMSVYNVGIMCIIGAAVSFL. Over 712–719 the chain is Extracellular; the sequence is TRDQPNVQ. Residues 720–740 form a helical membrane-spanning segment; it reads FCIVALVIIFCSTITLCLVFV. Residues 741–940 are Cytoplasmic-facing; the sequence is PKLITLRTNP…PSFRVMVSGL (200 aa). The tract at residues 762–789 is disordered; the sequence is TQNQKKEDSKTSTSVTSVNQASTSRLEG. Positions 772–786 are enriched in polar residues; sequence TSTSVTSVNQASTSR. 2 positions are modified to phosphoserine: serine 775 and serine 778. Residues 781-818 adopt a coiled-coil conformation; it reads QASTSRLEGLQSENHRLRMKITELDKDLEEVTMQLQDT. At threonine 818 the chain carries Phosphothreonine. 6 positions are modified to phosphoserine: serine 883, serine 892, serine 912, serine 915, serine 919, and serine 923.

It belongs to the G-protein coupled receptor 3 family. GABA-B receptor subfamily. As to quaternary structure, heterodimer of GABBR1 and GABBR2. Homodimers may form, but are inactive. Interacts (via C-terminus) with ATF4 (via leucine zipper domain).

Its subcellular location is the cell membrane. The protein resides in the postsynaptic cell membrane. In terms of biological role, component of a heterodimeric G-protein coupled receptor for GABA, formed by GABBR1 and GABBR2. Within the heterodimeric GABA receptor, only GABBR1 seems to bind agonists, while GABBR2 mediates coupling to G proteins. Ligand binding causes a conformation change that triggers signaling via guanine nucleotide-binding proteins (G proteins) and modulates the activity of down-stream effectors, such as adenylate cyclase. Signaling inhibits adenylate cyclase, stimulates phospholipase A2, activates potassium channels, inactivates voltage-dependent calcium-channels and modulates inositol phospholipid hydrolysis. Plays a critical role in the fine-tuning of inhibitory synaptic transmission. Pre-synaptic GABA receptor inhibits neurotransmitter release by down-regulating high-voltage activated calcium channels, whereas postsynaptic GABA receptor decreases neuronal excitability by activating a prominent inwardly rectifying potassium (Kir) conductance that underlies the late inhibitory postsynaptic potentials. Not only implicated in synaptic inhibition but also in hippocampal long-term potentiation, slow wave sleep, muscle relaxation and antinociception. Interacts with KCTD8, KCTD12 and KCTD16; this interaction determines the pharmacology and kinetics of the receptor response, the KCTD proteins markedly accelerating the GABA-B response, although to different extents. In Mus musculus (Mouse), this protein is Gamma-aminobutyric acid type B receptor subunit 2 (Gabbr2).